Reading from the N-terminus, the 462-residue chain is ATP synthase subunit beta (462 aa).

An ATP-binding site is contributed by 149–156 (GGAGVGKT).

The protein belongs to the ATPase alpha/beta chains family. In terms of assembly, F-type ATPases have 2 components, CF(1) - the catalytic core - and CF(0) - the membrane proton channel. CF(1) has five subunits: alpha(3), beta(3), gamma(1), delta(1), epsilon(1). CF(0) has three main subunits: a(1), b(2) and c(9-12). The alpha and beta chains form an alternating ring which encloses part of the gamma chain. CF(1) is attached to CF(0) by a central stalk formed by the gamma and epsilon chains, while a peripheral stalk is formed by the delta and b chains.

It localises to the cell inner membrane. The catalysed reaction is ATP + H2O + 4 H(+)(in) = ADP + phosphate + 5 H(+)(out). Its function is as follows. Produces ATP from ADP in the presence of a proton gradient across the membrane. The catalytic sites are hosted primarily by the beta subunits. The chain is ATP synthase subunit beta from Fusobacterium nucleatum subsp. nucleatum (strain ATCC 25586 / DSM 15643 / BCRC 10681 / CIP 101130 / JCM 8532 / KCTC 2640 / LMG 13131 / VPI 4355).